Consider the following 89-residue polypeptide: Small ribosomal subunit protein uS17 (89 aa).

This sequence belongs to the universal ribosomal protein uS17 family. As to quaternary structure, part of the 30S ribosomal subunit.

One of the primary rRNA binding proteins, it binds specifically to the 5'-end of 16S ribosomal RNA. This is Small ribosomal subunit protein uS17 from Ralstonia nicotianae (strain ATCC BAA-1114 / GMI1000) (Ralstonia solanacearum).